The following is a 490-amino-acid chain: GTPase Der (490 aa).

2 EngA-type G domains span residues Pro3–Leu166 and Ile203–Thr376. GTP-binding positions include Gly9–Ser16, Asp56–Ile60, Asn118–Asp121, Gly209–Ser216, Asp256–Val260, and Asn321–Asp324. Residues Arg377 to Glu461 form the KH-like domain.

This sequence belongs to the TRAFAC class TrmE-Era-EngA-EngB-Septin-like GTPase superfamily. EngA (Der) GTPase family. Associates with the 50S ribosomal subunit.

GTPase that plays an essential role in the late steps of ribosome biogenesis. This chain is GTPase Der, found in Shigella flexneri serotype 5b (strain 8401).